Consider the following 156-residue polypeptide: Small ribosomal subunit protein uS7 (156 aa).

This sequence belongs to the universal ribosomal protein uS7 family. In terms of assembly, part of the 30S ribosomal subunit. Contacts proteins S9 and S11.

In terms of biological role, one of the primary rRNA binding proteins, it binds directly to 16S rRNA where it nucleates assembly of the head domain of the 30S subunit. Is located at the subunit interface close to the decoding center, probably blocks exit of the E-site tRNA. In Parafrankia sp. (strain EAN1pec), this protein is Small ribosomal subunit protein uS7.